A 619-amino-acid polypeptide reads, in one-letter code: Mitogen-activated protein kinase kinase kinase 2 (619 aa).

4 disordered regions span residues 25-44 (LSLQ…QNDV), 126-168 (QATN…PPPG), 201-245 (LDPL…DNHQ), and 289-355 (RTQG…APTN). Serine 26 is subject to Phosphoserine. A PB1 domain is found at 43 to 122 (DVRVKFEHRG…KSLKILLVVN (80 aa)). Polar residues predominate over residues 126 to 143 (QATNLEPSPSPEDLNNTP). A phosphoserine mark is found at serine 153 and serine 164. Positions 203 to 219 (PLSLSSPENSGSGSCPS) are enriched in low complexity. Residues serine 239, serine 297, serine 311, serine 331, serine 344, and serine 349 each carry the phosphoserine modification. Residues 290-299 (TQGTSFRSPV) show a composition bias toward polar residues. Low complexity predominate over residues 300-315 (SFSPTDHSLSTSSGSS). Over residues 322-332 (DDSRIRRRGSD) the composition is skewed to basic and acidic residues. A compositionally biased stretch (polar residues) spans 336-346 (PTLTVTDISPP). Residues 356 to 616 (WRLGKLLGQG…AEELLRHMFV (261 aa)) form the Protein kinase domain. ATP-binding positions include 362 to 370 (LGQGAFGRV) and lysine 385. Aspartate 483 acts as the Proton acceptor in catalysis.

Belongs to the protein kinase superfamily. STE Ser/Thr protein kinase family. MAP kinase kinase kinase subfamily. In terms of assembly, self-associates. Binds both upstream activators and downstream substrates in multimolecular complexes. Interacts (via the kinase catalytic domain) with STK38. Interacts with XIAP/BIRC4. Mg(2+) is required as a cofactor. Post-translationally, ubiquitination by XIAP/BIRC4 does not lead to proteasomal degradation. In terms of processing, autophosphorylated.

It is found in the cytoplasm. The protein localises to the nucleus. The catalysed reaction is L-seryl-[protein] + ATP = O-phospho-L-seryl-[protein] + ADP + H(+). The enzyme catalyses L-threonyl-[protein] + ATP = O-phospho-L-threonyl-[protein] + ADP + H(+). With respect to regulation, activated by phosphorylation on Thr-524. Interacts with PKN2; the interaction activates PKN2 kinase activity in a MAP3K2-independent kinase activity. Component of a protein kinase signal transduction cascade. Regulates the JNK and ERK5 pathways by phosphorylating and activating MAP2K5 and MAP2K7. Plays a role in caveolae kiss-and-run dynamics. This is Mitogen-activated protein kinase kinase kinase 2 (Map3k2) from Mus musculus (Mouse).